The sequence spans 435 residues: ATP-dependent RNA helicase RhlB (435 aa).

Residues 9 to 37 (QKFADLGLNPQVVEGLEKKGFEFCTPIQA) carry the Q motif motif. In terms of domain architecture, Helicase ATP-binding spans 40-219 (LPVLLSGQDI…FEHMHNPEHV (180 aa)). 53-60 (AQTGTGKT) is a binding site for ATP. Residues 165–168 (DEAD) carry the DEAD box motif. In terms of domain architecture, Helicase C-terminal spans 245–390 (ALLQTLIEEE…VSDYDSSALI (146 aa)). A disordered region spans residues 395-435 (APVRTPSARNQQRRTNTGGARSGDRKSNNRRPRQPRQHKEA). A compositionally biased stretch (polar residues) spans 401–413 (SARNQQRRTNTGG). Over residues 422-435 (NNRRPRQPRQHKEA) the composition is skewed to basic residues.

Belongs to the DEAD box helicase family. RhlB subfamily. Component of the RNA degradosome, which is a multiprotein complex involved in RNA processing and mRNA degradation.

Its subcellular location is the cytoplasm. The catalysed reaction is ATP + H2O = ADP + phosphate + H(+). Its function is as follows. DEAD-box RNA helicase involved in RNA degradation. Has RNA-dependent ATPase activity and unwinds double-stranded RNA. The polypeptide is ATP-dependent RNA helicase RhlB (Vibrio vulnificus (strain YJ016)).